Consider the following 638-residue polypeptide: MDLWQLLLTVALAGSSDAFSGSEATPATLGRASESVQRVHPGLGTNSSGKPKFTKCRSPELETFSCHWTDGVHHGLKSPGSVQLFYIRRNTQEWTQEWKECPDYVSAGENSCYFNSSYTSIWIPYCIKLTNNGGMVDQKCFSVEEIVQPDPPIGLNWTLLNVSLTGIHADIQVRWEPPPNADVQKGWIVLEYELQYKEVNETQWKMMDPVLSTSVPVYSLRLDKEYEVRVRSRQRSSEKYGEFSEVLYVTLPQMSPFTCEEDFRFPWFLIIIFGIFGLTVMLFVFIFSKQQRIKMLILPPVPVPKIKGIDPDLLKEGKLEEVNTILAIQDSYKPEFYNDDSWVEFIELDIDDPDEKTEGSDTDRLLSNSHQKSLSVLAAKDDDSGRTSCYEPDILENDFNASDGCDGNSEVAQPQRLKGEADLLCLDQKNQNNSPYHDVSPAAQQPEVVLAEEDKPRPLLTGEIESTLQAAPSQLSNPNSLANIDFYAQVSDITPAGSVVLSPGQKNKAGNSQCDAHPEVVSLCQTNFIMDNAYFCEADAKKCIAVAPHVDVESRVEPSFNQEDIYITTESLTTTAERSGTAEDAPGSEMPVPDYTSIHLVQSPQGLVLNAATLPLPDKEFLSSCGYVSTDQLNKILP.

A signal peptide spans 1–18; it reads MDLWQLLLTVALAGSSDA. Residues 19–264 are Extracellular-facing; that stretch reads FSGSEATPAT…SPFTCEEDFR (246 aa). The tract at residues 30–51 is disordered; sequence GRASESVQRVHPGLGTNSSGKP. N-linked (GlcNAc...) asparagine glycosylation occurs at N46. Cystine bridges form between C56-C66 and C101-C112. N115 carries an N-linked (GlcNAc...) asparagine glycan. An intrachain disulfide couples C126 to C140. The Fibronectin type-III domain occupies 151 to 254; that stretch reads PPIGLNWTLL…EVLYVTLPQM (104 aa). N-linked (GlcNAc...) asparagine glycosylation is found at N156, N161, and N200. The WSXWS motif motif lies at 240-244; sequence YGEFS. The interval 260–262 is required for ADAM17-mediated proteolysis; that stretch reads EED. Residues 265-288 traverse the membrane as a helical segment; that stretch reads FPWFLIIIFGIFGLTVMLFVFIFS. Residues 289–638 lie on the Cytoplasmic side of the membrane; the sequence is KQQRIKMLIL…STDQLNKILP (350 aa). The interval 294-379 is required for JAK2 binding; the sequence is KMLILPPVPV…HQKSLSVLAA (86 aa). The Box 1 motif signature appears at 297–305; it reads ILPPVPVPK. The UbE motif motif lies at 340–349; it reads DSWVEFIELD. A Phosphoserine modification is found at S341. Y487 bears the Phosphotyrosine mark. Positions 573-592 are disordered; the sequence is TTTAERSGTAEDAPGSEMPV. Y595 carries the phosphotyrosine modification.

This sequence belongs to the type I cytokine receptor family. Type 1 subfamily. On growth hormone (GH) binding, forms homodimers and binds JAK2 via a box 1-containing domain. In terms of processing, the soluble form (GHBP) is produced by phorbol ester-promoted proteolytic cleavage at the cell surface (shedding) by ADAM17/TACE. Shedding is inhibited by growth hormone (GH) binding to the receptor probably due to a conformational change in GHR rendering the receptor inaccessible to ADAM17. Post-translationally, on GH binding, phosphorylated on tyrosine residues in the cytoplasmic domain by JAK2. Ubiquitinated by the ECS(SOCS2) complex following ligand-binding and phosphorylation by JAK2, leading to its degradation by the proteasome. Regulation by the ECS(SOCS2) complex acts as a negative feedback loop of growth hormone receptor signaling. Ubiquitination is not sufficient for GHR internalization.

Its subcellular location is the cell membrane. The protein localises to the secreted. Its function is as follows. Receptor for pituitary gland growth hormone involved in regulating postnatal body growth. On ligand binding, couples to, and activates the JAK2/STAT5 pathway. In terms of biological role, the soluble form acts as a reservoir of growth hormone in plasma and may be a modulator/inhibitor of GH signaling. This Oryctolagus cuniculus (Rabbit) protein is Growth hormone receptor.